The chain runs to 186 residues: MIDAKTCINDAQEKMDMAVMYLEEALAHIRAGKASTRLLDGIRVDSYGSMVPISNVAAVTTPDARSIAIKPWDKSMFRIIEKAIMDSDLGITPENNGEIIRLGIPPLTEERRKQLAKQCKGEGETAKVSIRNARRDAIDTLKKAVKEGMPEDEQKNAEAKLQKVHDKYIAKIEELLAEKDKEIMTV.

The protein belongs to the RRF family.

It localises to the cytoplasm. In terms of biological role, responsible for the release of ribosomes from messenger RNA at the termination of protein biosynthesis. May increase the efficiency of translation by recycling ribosomes from one round of translation to another. The sequence is that of Ribosome-recycling factor from Phocaeicola vulgatus (strain ATCC 8482 / DSM 1447 / JCM 5826 / CCUG 4940 / NBRC 14291 / NCTC 11154) (Bacteroides vulgatus).